A 361-amino-acid polypeptide reads, in one-letter code: DNA replication and repair protein RecF (361 aa).

Gly-30–Thr-37 serves as a coordination point for ATP.

This sequence belongs to the RecF family.

Its subcellular location is the cytoplasm. Its function is as follows. The RecF protein is involved in DNA metabolism; it is required for DNA replication and normal SOS inducibility. RecF binds preferentially to single-stranded, linear DNA. It also seems to bind ATP. The protein is DNA replication and repair protein RecF of Glaesserella parasuis serovar 5 (strain SH0165) (Haemophilus parasuis).